The sequence spans 60 residues: Large ribosomal subunit protein uL30 (60 aa).

It belongs to the universal ribosomal protein uL30 family. In terms of assembly, part of the 50S ribosomal subunit.

In Shewanella woodyi (strain ATCC 51908 / MS32), this protein is Large ribosomal subunit protein uL30.